A 176-amino-acid chain; its full sequence is Ribosome maturation factor RimM (176 aa).

Residues 93–166 form the PRC barrel domain; that stretch reads EGEYYHADLI…RVVIELPAEI (74 aa).

The protein belongs to the RimM family. Binds ribosomal protein uS19.

It is found in the cytoplasm. Its function is as follows. An accessory protein needed during the final step in the assembly of 30S ribosomal subunit, possibly for assembly of the head region. Essential for efficient processing of 16S rRNA. May be needed both before and after RbfA during the maturation of 16S rRNA. It has affinity for free ribosomal 30S subunits but not for 70S ribosomes. This Rhodopseudomonas palustris (strain BisB18) protein is Ribosome maturation factor RimM.